The sequence spans 416 residues: Cyclic dinucleotide synthase CdnG (416 aa).

GTP is bound at residue Ser-72. Residues Asp-89, Asp-91, and Asp-140 contribute to the active site. Asp-91 contributes to the GTP binding site. Mg(2+) is bound at residue Asp-91. The disordered stretch occupies residues 145-167 (RRRAPKEKEGEIPHAKKGTRSDP). The segment covering 150 to 167 (KEKEGEIPHAKKGTRSDP) has biased composition (basic and acidic residues). GTP contacts are provided by Lys-236, Ser-253, Glu-305, Arg-306, and Asp-309.

This sequence belongs to the CD-NTase family. G10 subfamily. The cofactor is Mg(2+).

The catalysed reaction is UTP + GTP = 3',3'-cGMP-UMP + 2 diphosphate. The enzyme catalyses GTP + ATP = 3',3'-cGAMP + 2 diphosphate. It carries out the reaction 2 ATP = 3',3'-c-di-AMP + 2 diphosphate. Functionally, cyclic nucleotide synthase (second messenger synthase) of a CBASS antivirus system. CBASS (cyclic oligonucleotide-based antiphage signaling system) provides immunity against bacteriophage. The CD-NTase protein synthesizes cyclic nucleotides in response to infection; these serve as specific second messenger signals. The signals activate a diverse range of effectors, leading to bacterial cell death and thus abortive phage infection. A type II-short CBASS system. Cyclic dinucleotide synthase that catalyzes the synthesis of predominantly 3'3'-cGMP-UMP, followed by 3'3'-cGAMP and c-di-AMP in a reaction mixture of ATP, CTP, GTP and UTP. The cyclic nucleotide products are second messengers that activate the CBASS Cap5 effector nuclease, leading to DNA degradation and probably cell death. Cyclic nucleotides do not activate the effector equally; reactions with ATP/GTP, ATP/UTP and ATP alone activate Cap5, whereas reaction with GTP/UTP (the major in vitro product) do not. This Bradyrhizobium diazoefficiens (strain JCM 10833 / BCRC 13528 / IAM 13628 / NBRC 14792 / USDA 110) protein is Cyclic dinucleotide synthase CdnG.